We begin with the raw amino-acid sequence, 359 residues long: MRVLGIETSCDETAAAIVQRDDMGEGRILSNVVLSQIAEHEPYGGVVPEIAARAHVEALDRLVDRALNDAGLKLYEVDAVAATAGPGLIGGLIVGLMTAKALAMAAQKPFYAVNHLEGHALTARLTDGLPFPYLLLLVSGGHTQMVLVRGIGDYERLGTTIDDALGEAFDKTAKLLGLPYPGGPAVERMALQGDQKRFALPRPLKGEARLDFSFSGLKTAVRQTATELVPLTDQDVTDICASFQAAVADTLSDRVGRSLERFKTEFPDCATPSLVVAGGVAANKTLRAALENLCTRHGFAFIAPPLNLCTDNAAMIAWAGAERAATQAPDSLDIAPRSRWPLDEKSAPVFGTGRRGAKA.

Fe cation contacts are provided by H115 and H119. Residues 137–141, D170, G183, and N283 each bind substrate; that span reads LVSGG. Position 311 (D311) interacts with Fe cation. The tract at residues 328–359 is disordered; the sequence is APDSLDIAPRSRWPLDEKSAPVFGTGRRGAKA.

It belongs to the KAE1 / TsaD family. It depends on Fe(2+) as a cofactor.

It localises to the cytoplasm. The catalysed reaction is L-threonylcarbamoyladenylate + adenosine(37) in tRNA = N(6)-L-threonylcarbamoyladenosine(37) in tRNA + AMP + H(+). Functionally, required for the formation of a threonylcarbamoyl group on adenosine at position 37 (t(6)A37) in tRNAs that read codons beginning with adenine. Is involved in the transfer of the threonylcarbamoyl moiety of threonylcarbamoyl-AMP (TC-AMP) to the N6 group of A37, together with TsaE and TsaB. TsaD likely plays a direct catalytic role in this reaction. The chain is tRNA N6-adenosine threonylcarbamoyltransferase from Brucella canis (strain ATCC 23365 / NCTC 10854 / RM-666).